The primary structure comprises 207 residues: Guanylate kinase (207 aa).

A Guanylate kinase-like domain is found at 5-185 (GFVLLISGPS…SYEALRAILI (181 aa)). 12-19 (GPSGAGKS) serves as a coordination point for ATP.

Belongs to the guanylate kinase family.

The protein localises to the cytoplasm. It catalyses the reaction GMP + ATP = GDP + ADP. Functionally, essential for recycling GMP and indirectly, cGMP. The protein is Guanylate kinase (gmk) of Campylobacter jejuni subsp. jejuni serotype O:2 (strain ATCC 700819 / NCTC 11168).